The sequence spans 467 residues: Proton extrusion protein PxcA (467 aa).

Residues 146 to 161 (SQVRTTSSQPPENPSL) are compositionally biased toward polar residues. 2 disordered regions span residues 146–167 (SQVRTTSSQPPENPSLTDALRT) and 186–205 (PQLIKQRTEQSKKSRGKADT). Residues 191 to 203 (QRTEQSKKSRGKA) show a composition bias toward basic and acidic residues. 4 helical membrane passes run 249–269 (FILLIIIVPLLTHQLSKALIV), 352–372 (IFSVGAFIWLLLVSKPSIMVL), 391–411 (IIILFTDVFVGFHSPHGWEVI), and 427–447 (FIFLFIATFPVILDTIFKYWI).

This sequence belongs to the CemA family.

The protein localises to the cell inner membrane. Functionally, required for H(+) efflux immediately after light irradiation to form a rapid H(+) concentration gradient across the thylakoid membranes. Together with PxcL, contributes to transient H(+) uptake following dark to light transition. This Nostoc sp. (strain PCC 7120 / SAG 25.82 / UTEX 2576) protein is Proton extrusion protein PxcA.